Consider the following 198-residue polypeptide: tRNA (cytidine(56)-2'-O)-methyltransferase (198 aa).

S-adenosyl-L-methionine-binding positions include Leu81, 110 to 114, and 128 to 135; these read GAEKV and IGNQPHSE. The interval 178–198 is disordered; that stretch reads DAKQAEASGEGASRKNGQLPS.

Belongs to the aTrm56 family. In terms of assembly, homodimer.

It localises to the cytoplasm. The catalysed reaction is cytidine(56) in tRNA + S-adenosyl-L-methionine = 2'-O-methylcytidine(56) in tRNA + S-adenosyl-L-homocysteine + H(+). Its function is as follows. Specifically catalyzes the AdoMet-dependent 2'-O-ribose methylation of cytidine at position 56 in tRNAs. In Pyrococcus abyssi (strain GE5 / Orsay), this protein is tRNA (cytidine(56)-2'-O)-methyltransferase.